A 382-amino-acid chain; its full sequence is Mannitol-1-phosphate 5-dehydrogenase (382 aa).

Residue 4–15 (AVHFGAGNIGRG) coordinates NAD(+).

Belongs to the mannitol dehydrogenase family.

The enzyme catalyses D-mannitol 1-phosphate + NAD(+) = beta-D-fructose 6-phosphate + NADH + H(+). In Vibrio vulnificus (strain YJ016), this protein is Mannitol-1-phosphate 5-dehydrogenase.